Reading from the N-terminus, the 237-residue chain is Class B acid phosphatase (237 aa).

Residues 1 to 23 (MRKVTLVFSAIAFAFSLNGVVQA) form the signal peptide. Residue D69 is the Nucleophile of the active site. 2 residues coordinate Mg(2+): D69 and D71. D71 serves as the catalytic Proton donor. Substrate contacts are provided by residues 137-138 (TG) and K177. Residue D192 participates in Mg(2+) binding.

The protein belongs to the class B bacterial acid phosphatase family. In terms of assembly, homotetramer. Mg(2+) serves as cofactor.

The protein localises to the periplasm. It carries out the reaction a phosphate monoester + H2O = an alcohol + phosphate. Functionally, dephosphorylates several organic phosphate monoesters. Also has a phosphotransferase activity catalyzing the transfer of low-energy phosphate groups from organic phosphate monoesters to free hydroxyl groups of various organic compounds. The protein is Class B acid phosphatase of Xenorhabdus bovienii (strain SS-2004) (Xenorhabdus nematophila subsp. bovienii).